The sequence spans 267 residues: Tryptophan synthase alpha chain (267 aa).

Residues glutamate 51 and aspartate 62 each act as proton acceptor in the active site.

This sequence belongs to the TrpA family. In terms of assembly, tetramer of two alpha and two beta chains.

The catalysed reaction is (1S,2R)-1-C-(indol-3-yl)glycerol 3-phosphate + L-serine = D-glyceraldehyde 3-phosphate + L-tryptophan + H2O. Its pathway is amino-acid biosynthesis; L-tryptophan biosynthesis; L-tryptophan from chorismate: step 5/5. Its function is as follows. The alpha subunit is responsible for the aldol cleavage of indoleglycerol phosphate to indole and glyceraldehyde 3-phosphate. The polypeptide is Tryptophan synthase alpha chain (Prochlorococcus marinus (strain SARG / CCMP1375 / SS120)).